The chain runs to 71 residues: Small ribosomal subunit protein bS21 (71 aa).

A compositionally biased stretch (basic residues) spans 48–60; sequence KKAAAVKRYKKKL. A disordered region spans residues 48–71; that stretch reads KKAAAVKRYKKKLQRESIRTTRMY. Over residues 61 to 71 the composition is skewed to basic and acidic residues; the sequence is QRESIRTTRMY.

This sequence belongs to the bacterial ribosomal protein bS21 family.

The sequence is that of Small ribosomal subunit protein bS21 from Psychrobacter sp. (strain PRwf-1).